The chain runs to 121 residues: Holin-like protein CidA (121 aa).

A run of 4 helical transmembrane segments spans residues 3–23 (WWKL…GEWI), 30–50 (PVPG…FNLV), 58–78 (GADF…VAVI), and 89–109 (IDLI…TGLL).

This sequence belongs to the CidA/LrgA family. CidA subfamily.

Its subcellular location is the cell membrane. Its function is as follows. Increases the activity of extracellular murein hydrolases possibly by mediating their export via hole formation. Inhibited by the antiholin-like proteins LrgAB. In an unstressed cell, the LrgAB products probably inhibit the function of the CidA protein. When a cell is stressed by the addition of antibiotics or by other factors in the environment, CidA possibly oligomerizes within the bacterial cell membrane, creating lesions that disrupt the proton motive force, which in turn results in loss of cell viability. These lesions are also hypothesized to regulate the subsequent cell lysis by either allowing the murein hydrolases access to the cell wall substrate and/or regulating their activity by a possible change in the cell wall pH that results from loss of membrane potential. The chain is Holin-like protein CidA from Bacillus cereus (strain ATCC 10987 / NRS 248).